We begin with the raw amino-acid sequence, 458 residues long: Succinate-semialdehyde dehydrogenase [NADP(+)] 1 (458 aa).

NADP(+) is bound by residues 134–135 (WN), 158–161 (KHAS), and 210–211 (GS). The active-site Proton acceptor is the glutamate 232. Position 233 (leucine 233) interacts with NADP(+). The active-site Nucleophile is cysteine 266. Residue glutamate 363 participates in NADP(+) binding.

This sequence belongs to the aldehyde dehydrogenase family.

The enzyme catalyses succinate semialdehyde + NADP(+) + H2O = succinate + NADPH + 2 H(+). In terms of biological role, catalyzes the NADP(+)-dependent oxidation of succinate semialdehyde to succinate. It is believed to be the main source of succinate semialdehyde dehydrogenase activity in Mycobacterium. This chain is Succinate-semialdehyde dehydrogenase [NADP(+)] 1 (gabD1), found in Mycobacterium ulcerans (strain Agy99).